A 731-amino-acid chain; its full sequence is 1,4-alpha-glucan branching enzyme GlgB 2 (731 aa).

Catalysis depends on Asp410, which acts as the Nucleophile. Glu463 serves as the catalytic Proton donor.

Belongs to the glycosyl hydrolase 13 family. GlgB subfamily. Monomer.

It carries out the reaction Transfers a segment of a (1-&gt;4)-alpha-D-glucan chain to a primary hydroxy group in a similar glucan chain.. The protein operates within glycan biosynthesis; glycogen biosynthesis. Catalyzes the formation of the alpha-1,6-glucosidic linkages in glycogen by scission of a 1,4-alpha-linked oligosaccharide from growing alpha-1,4-glucan chains and the subsequent attachment of the oligosaccharide to the alpha-1,6 position. The chain is 1,4-alpha-glucan branching enzyme GlgB 2 from Xanthomonas oryzae pv. oryzae (strain MAFF 311018).